Here is a 586-residue protein sequence, read N- to C-terminus: MKENETLKQIVLKSLEEGVDSLIVSFPDVEKSSLRIKIEYSRDEKFGDYSTSFSLENSKLLKRNPIQVSKELVEILQKRTDLFEKVDFTPPGFVNFKISPSYLLEYIEKSILSGDHFPKVEHPLKINLEFVSANPTGPLNIVSARAAANGDTMASLLKAIGHNVDKEFYINDYGNQVFLLGVSTLVRIREIKGEFSTRQEADDTTPIDTILEKNILPAEGYRGEYIKDIANALLNEPKKSSQIETLLKEKKYRELAELCSIWTVENNLDWQRKDLDSFGVEFDNYFRERTLHESDKVLAVMKDLERVGKIFEEDGKKIFRSTEYGDDKDRVVVRDDGRPTYLLADIAYHKDKIERGYDRIYDIWGPDHHGYISRLSGAVQTLGYKKENFKVIISQQVNLLESGQKVKMSKRAGSFQTMSDLIGFLGKHGKDVGRYFFVMRSLDAPLDFDLDLAQDQSDKNPVFYLQYAHARICSIFREVGTESSAEAAESLEMSEERKRLLFWIARFPEEIFDSANSMEPHRVANYLQSFAKAFTGFYLGKNNRLKDATPEVRLGLARICLAARSVLAEGLGLIGVSAPEKMEKES.

Residues 133–143 (ANPTGPLNIVS) carry the 'HIGH' region motif.

It belongs to the class-I aminoacyl-tRNA synthetase family. In terms of assembly, monomer.

It is found in the cytoplasm. The enzyme catalyses tRNA(Arg) + L-arginine + ATP = L-arginyl-tRNA(Arg) + AMP + diphosphate. This Leptospira borgpetersenii serovar Hardjo-bovis (strain JB197) protein is Arginine--tRNA ligase.